The primary structure comprises 476 residues: Proline--tRNA ligase 2 (476 aa).

The protein belongs to the class-II aminoacyl-tRNA synthetase family. ProS type 3 subfamily. In terms of assembly, homodimer.

It localises to the cytoplasm. The enzyme catalyses tRNA(Pro) + L-proline + ATP = L-prolyl-tRNA(Pro) + AMP + diphosphate. Catalyzes the attachment of proline to tRNA(Pro) in a two-step reaction: proline is first activated by ATP to form Pro-AMP and then transferred to the acceptor end of tRNA(Pro). This Bacillus cereus (strain ZK / E33L) protein is Proline--tRNA ligase 2.